The sequence spans 559 residues: Tryprostatin B 6-hydroxylase (559 aa).

3 helical membrane passes run 13–35, 48–65, and 82–104; these read PSVMKCGYLATAGLIGICTHLSY, YVRFHLCLTMGVAALLYA, and VSLLMATYLVGLFASLLLYRTLF. Residue Cys-502 coordinates heme.

Belongs to the cytochrome P450 family. Heme serves as cofactor.

It is found in the membrane. The enzyme catalyses tryprostatin B + reduced [NADPH--hemoprotein reductase] + O2 = 6-hydroxytryprostatin B + oxidized [NADPH--hemoprotein reductase] + H2O + H(+). It participates in mycotoxin biosynthesis. Its function is as follows. Cytochrome P450 monooxygenase; part of the gene cluster that mediates the biosynthesis of fumitremorgins, indole alkaloids that carry not only intriguing chemical structures, but also interesting biological and pharmacological activities. The biosynthesis of fumitremorgin-type alkaloids begins by condensation of the two amino acids L-tryptophan and L-proline to brevianamide F, catalyzed by the non-ribosomal peptide synthetase ftmA. Brevianamide F is then prenylated by the prenyltransferase ftmPT1/ftmB in the presence of dimethylallyl diphosphate, resulting in the formation of tryprostatin B. The three cytochrome P450 monooxygenases, ftmP450-1/ftmC, ftmP450-2/ftmE and ftmP450-3/FtmG, are responsible for the conversion of tryprostatin B to 6-hydroxytryprostatin B, tryprostatin A to fumitremorgin C and fumitremorgin C to 12,13-dihydroxyfumitremorgin C, respectively. The putative methyltransferase ftmMT/ftmD is expected for the conversion of 6-hydroxytryprostatin B to tryprostatin A. FtmPT2/FtmH catalyzes the prenylation of 12,13-dihydroxyfumitre-morgin C in the presence of dimethylallyl diphosphate, resulting in the formation of fumitremorgin B. Fumitremorgin B is further converted to verruculogen by ftmOx1/ftmF via the insertion of an endoperoxide bond between the two prenyl moieties. In some fungal species, verruculogen is further converted to fumitremorgin A, but the enzymes involved in this step have not been identified yet. In Aspergillus fumigatus (Neosartorya fumigata), this protein is Tryprostatin B 6-hydroxylase.